The primary structure comprises 476 residues: Hyaluronidase-2 (476 aa).

A signal peptide spans 1–20 (MWTGLGPAVTLALVLVVAWA). Cystine bridges form between Cys47/Cys343 and Cys214/Cys230. Asn77 and Asn106 each carry an N-linked (GlcNAc...) asparagine glycan. Glu138 (proton donor) is an active-site residue. Residues Asn340 and Asn360 are each glycosylated (N-linked (GlcNAc...) asparagine). The EGF-like domain maps to 364-442 (AAQYCSWAQC…YLGWGGEQCQ (79 aa)). Disulfide bonds link Cys368-Cys379, Cys373-Cys430, and Cys432-Cys441. The GPI-anchor amidated glycine moiety is linked to residue Gly451. A propeptide spans 452 to 476 (ASGAWAGSHLTGLLAVAVLAFTWTS) (removed in mature form).

This sequence belongs to the glycosyl hydrolase 56 family. As to quaternary structure, interacts with MST1R. In terms of assembly, (Microbial infection) Interacts with Jaagsiekte sheep retrovirus (JSRV) envelope proteins.

The protein localises to the cell membrane. It carries out the reaction Random hydrolysis of (1-&gt;4)-linkages between N-acetyl-beta-D-glucosamine and D-glucuronate residues in hyaluronate.. Catalyzes hyaluronan degradation into small fragments that are endocytosed and degraded in lysosomes by HYAL1 and exoglycosidases. Essential for the breakdown of extracellular matrix hyaluronan. The protein is Hyaluronidase-2 (HYAL2) of Ovis aries (Sheep).